A 250-amino-acid chain; its full sequence is Ribonucleotide monophosphatase NagD (250 aa).

Residues aspartate 9 and aspartate 11 each coordinate Mg(2+). Residue aspartate 11 is part of the active site. Substrate is bound by residues aspartate 11, 42 to 43 (TN), and lysine 176. Aspartate 201 serves as a coordination point for Mg(2+). 202-205 (NLRT) is a substrate binding site.

This sequence belongs to the HAD-like hydrolase superfamily. NagD family. Monomer. Requires Mg(2+) as cofactor. It depends on Mn(2+) as a cofactor. The cofactor is Co(2+). Zn(2+) serves as cofactor.

It carries out the reaction a ribonucleoside 5'-phosphate + H2O = a ribonucleoside + phosphate. In terms of biological role, catalyzes the dephosphorylation of an unusually broad range of substrate including deoxyribo- and ribonucleoside tri-, di-, and monophosphates, as well as polyphosphate and glucose-1-P (Glu1P). This chain is Ribonucleotide monophosphatase NagD (nagD), found in Escherichia coli O157:H7.